The primary structure comprises 72 residues: uncharacterized protein (72 aa).

This is an uncharacterized protein from Acidianus hospitalis (AFV-1).